The chain runs to 308 residues: Pyrroline-5-carboxylate reductase 3 (308 aa).

The protein belongs to the pyrroline-5-carboxylate reductase family. Homodecamer; composed of 5 homodimers.

It is found in the cytoplasm. It catalyses the reaction L-proline + NADP(+) = (S)-1-pyrroline-5-carboxylate + NADPH + 2 H(+). The catalysed reaction is L-proline + NAD(+) = (S)-1-pyrroline-5-carboxylate + NADH + 2 H(+). Its pathway is amino-acid biosynthesis; L-proline biosynthesis; L-proline from L-glutamate 5-semialdehyde: step 1/1. Functionally, oxidoreductase that catalyzes the last step in proline biosynthesis, which corresponds to the reduction of pyrroline-5-carboxylate (P5C) to L-proline using NAD(P)H. Proline is synthesized from either glutamate or ornithine; both are converted to P5C, and then to proline via pyrroline-5-carboxylate reductases (PYCRs). PYCR3 is exclusively linked to the biosynthesis of proline from ornithine. This Bos taurus (Bovine) protein is Pyrroline-5-carboxylate reductase 3.